The chain runs to 328 residues: Phenylalanine--tRNA ligase alpha subunit (328 aa).

Mg(2+) is bound at residue Glu-253.

This sequence belongs to the class-II aminoacyl-tRNA synthetase family. Phe-tRNA synthetase alpha subunit type 1 subfamily. As to quaternary structure, tetramer of two alpha and two beta subunits. The cofactor is Mg(2+).

The protein resides in the cytoplasm. It catalyses the reaction tRNA(Phe) + L-phenylalanine + ATP = L-phenylalanyl-tRNA(Phe) + AMP + diphosphate + H(+). This Coxiella burnetii (strain CbuG_Q212) (Coxiella burnetii (strain Q212)) protein is Phenylalanine--tRNA ligase alpha subunit.